The primary structure comprises 474 residues: ATP synthase subunit beta 2 (474 aa).

Residue 153–160 (GGAGVGKT) coordinates ATP.

Belongs to the ATPase alpha/beta chains family. F-type ATPases have 2 components, CF(1) - the catalytic core - and CF(0) - the membrane proton channel. CF(1) has five subunits: alpha(3), beta(3), gamma(1), delta(1), epsilon(1). CF(0) has three main subunits: a(1), b(2) and c(9-12). The alpha and beta chains form an alternating ring which encloses part of the gamma chain. CF(1) is attached to CF(0) by a central stalk formed by the gamma and epsilon chains, while a peripheral stalk is formed by the delta and b chains.

The protein localises to the cell inner membrane. It catalyses the reaction ATP + H2O + 4 H(+)(in) = ADP + phosphate + 5 H(+)(out). Produces ATP from ADP in the presence of a proton gradient across the membrane. The catalytic sites are hosted primarily by the beta subunits. This chain is ATP synthase subunit beta 2, found in Syntrophotalea carbinolica (strain DSM 2380 / NBRC 103641 / GraBd1) (Pelobacter carbinolicus).